Here is a 185-residue protein sequence, read N- to C-terminus: Ribosome-recycling factor (185 aa).

This sequence belongs to the RRF family.

It is found in the cytoplasm. In terms of biological role, responsible for the release of ribosomes from messenger RNA at the termination of protein biosynthesis. May increase the efficiency of translation by recycling ribosomes from one round of translation to another. The protein is Ribosome-recycling factor of Brevibacillus brevis (strain 47 / JCM 6285 / NBRC 100599).